A 230-amino-acid polypeptide reads, in one-letter code: MYELMENKQRKFWFYVRKGIFQVLLQLVLAMMTVWDFAGQNNTGTSYNKLYFYTSFLLVLYTGLKQILEYMFSICSEEVVFKKQFNNSRSRDILMSFDMLNSPSGHYIVTTKRIFKLRYSKSNLFIKIDKLCWFLGIDSPVLIPFNIIEKLGNIKDNLTTNNEDIYLNVTLTNLHKYQNDENDTEEDSEDIEKNSDPKENSDIDSLIPKVIETETDLNIKELQSELFRKV.

Residues 19-39 (GIFQVLLQLVLAMMTVWDFAG) traverse the membrane as a helical segment. N-linked (GlcNAc...) asparagine; by host glycosylation occurs at asparagine 41. A helical transmembrane segment spans residues 55 to 75 (SFLLVLYTGLKQILEYMFSIC). 4 N-linked (GlcNAc...) asparagine; by host glycosylation sites follow: asparagine 86, asparagine 157, asparagine 168, and asparagine 182. The stretch at 172–196 (TNLHKYQNDENDTEEDSEDIEKNSD) forms a coiled coil. A disordered region spans residues 178–205 (QNDENDTEEDSEDIEKNSDPKENSDIDS). The segment covering 180–190 (DENDTEEDSED) has biased composition (acidic residues). Residues 191–201 (IEKNSDPKENS) show a composition bias toward basic and acidic residues.

The protein resides in the membrane. This is an uncharacterized protein from Acanthamoeba polyphaga mimivirus (APMV).